Consider the following 224-residue polypeptide: Serum amyloid P-component (224 aa).

Residues 1-19 (MERLLLWVSVLASLPEAFA) form the signal peptide. The 201-residue stretch at 24–224 (TGKVFVFPRE…YVVIKPRVWS (201 aa)) folds into the Pentraxin (PTX) domain. N51 carries an N-linked (GlcNAc...) asparagine glycan. C55 and C114 form a disulfide bridge. Residues D77, N78, E155, Q156, D157, and Q167 each coordinate Ca(2+).

The protein belongs to the pentraxin family. Homopentamer. Pentraxin (or pentaxin) have a discoid arrangement of 5 non-covalently bound subunits. The cofactor is Ca(2+).

The protein localises to the secreted. The sequence is that of Serum amyloid P-component (APCS) from Sus scrofa (Pig).